Reading from the N-terminus, the 394-residue chain is Protein TsgA homolog (394 aa).

12 helical membrane-spanning segments follow: residues 11–31 (WISY…GIVM), 51–71 (FLNA…EIIP), 76–96 (LVFG…GHNL), 101–121 (ISMF…TFLV), 134–154 (LLFT…AAAM), 162–182 (WYWV…LTLC), 206–226 (VGVL…LGFI), 246–266 (QLVS…SFIL), 274–294 (IVTV…STDN), 302–322 (ILAL…LGSL), 334–354 (FILT…GPIV), and 363–383 (LETA…LGFF).

The protein belongs to the major facilitator superfamily. TsgA family.

It localises to the cell inner membrane. The protein is Protein TsgA homolog of Yersinia pestis bv. Antiqua (strain Antiqua).